Reading from the N-terminus, the 779-residue chain is 3-isopropylmalate dehydratase (779 aa).

Residues cysteine 360, cysteine 421, and cysteine 424 each contribute to the [4Fe-4S] cluster site. A disordered region spans residues 484–518 (QDQSSPKVEVTSEDEKELESAAYDHAEPVQPEDAP). A Phosphoserine modification is found at serine 488. The residue at position 494 (threonine 494) is a Phosphothreonine. Serine 495 is modified (phosphoserine). Over residues 501–510 (LESAAYDHAE) the composition is skewed to basic and acidic residues.

The protein belongs to the aconitase/IPM isomerase family. Monomer. Requires [4Fe-4S] cluster as cofactor.

It carries out the reaction (2R,3S)-3-isopropylmalate = (2S)-2-isopropylmalate. It participates in amino-acid biosynthesis; L-leucine biosynthesis; L-leucine from 3-methyl-2-oxobutanoate: step 2/4. In terms of biological role, catalyzes the isomerization between 2-isopropylmalate and 3-isopropylmalate, via the formation of 2-isopropylmaleate. This Saccharomyces cerevisiae (strain ATCC 204508 / S288c) (Baker's yeast) protein is 3-isopropylmalate dehydratase (LEU1).